The primary structure comprises 295 residues: Protoheme IX farnesyltransferase (295 aa).

Transmembrane regions (helical) follow at residues 27-47 (LVVFTAIAGMVAAPGSIHPFL), 48-68 (ALISLMCIALGSGSAGAINMW), 94-114 (SALEFGITIGILSVFIMAIAV), 117-137 (ISAALLAVSILFYVFVYTIWL), 144-164 (NIVIGGAAGAFPPMIGWAVVT), 171-191 (SFILFLIIFMWTPPHFWALSL), 216-236 (KHILIYSILLVLTSLLPALFL), 241-261 (FYLSMAIIEGCVFIWFAISVI), and 272-292 (MFSYSISYLFSLFASIIFCSI).

This sequence belongs to the UbiA prenyltransferase family. Protoheme IX farnesyltransferase subfamily.

Its subcellular location is the cell membrane. It carries out the reaction heme b + (2E,6E)-farnesyl diphosphate + H2O = Fe(II)-heme o + diphosphate. The protein operates within porphyrin-containing compound metabolism; heme O biosynthesis; heme O from protoheme: step 1/1. Functionally, converts heme B (protoheme IX) to heme O by substitution of the vinyl group on carbon 2 of heme B porphyrin ring with a hydroxyethyl farnesyl side group. The sequence is that of Protoheme IX farnesyltransferase from Wolbachia pipientis subsp. Culex pipiens (strain wPip).